A 119-amino-acid chain; its full sequence is Autophagy-related protein 8 (119 aa).

Gly-116 is lipidated: Phosphatidylethanolamine amidated glycine. The propeptide at Glu-117–Leu-119 is removed in mature form.

The protein belongs to the ATG8 family. Conjugation to phosphatidylethanolamine (PE) leads to homodimerization. Interacts with ATG1, ATG3, ATG4, ATG7 and ATG12. The C-terminal Glu-117, Ala-118 and Leu-119 residues of ATG8 are removed by ATG4 to expose Gly-116 at the C-terminus. This Gly-116 forms then a thioester bond with ATG7 (E1-like activating enzyme) before being transferred to ATG3 (the specific E2 conjugating enzyme), in order to be finally amidated with phosphatidylethanolamine. This lipid modification anchors ATG8 to membranes and can be reversed by ATG4, releasing soluble ATG8.

The protein resides in the cytoplasmic vesicle. Its subcellular location is the cvt vesicle membrane. It localises to the autophagosome membrane. It is found in the vacuole membrane. Its function is as follows. Ubiquitin-like modifier involved in cytoplasm to vacuole transport (Cvt) vesicles and autophagosome formation. With ATG4, mediates the delivery of the vesicles and autophagosomes to the vacuole via the microtubule cytoskeleton. Required for selective autophagic degradation of the nucleus (nucleophagy) as well as for mitophagy which contributes to regulate mitochondrial quantity and quality by eliminating the mitochondria to a basal level to fulfill cellular energy requirements and preventing excess ROS production. Also participates in membrane fusion events that take place in the early secretory pathway. Also involved in endoplasmic reticulum-specific autophagic process and is essential for the survival of cells subjected to severe ER stress. The ATG8-PE conjugate mediates tethering between adjacent membranes and stimulates membrane hemifusion, leading to expansion of the autophagosomal membrane during autophagy. Moreover not only conjugation, but also subsequent ATG8-PE deconjugation is an important step required to facilitate multiple events during macroautophagy, and especially for efficient autophagosome biogenesis, the assembly of ATG9-containing tubulovesicular clusters into phagophores/autophagosomes, and for the disassembly of PAS-associated ATG components. Autophagy is required for conidiation, aerial mycelial growth, and pseudothecia formation, but not for host invasion. In Cochliobolus heterostrophus (strain C4 / ATCC 48331 / race T) (Southern corn leaf blight fungus), this protein is Autophagy-related protein 8.